The primary structure comprises 379 residues: Chaperone protein DnaJ (379 aa).

The region spanning 5–70 (DYYESLGVAK…QKRAAYDQYG (66 aa)) is the J domain. Residues 134-212 (GVTKEIRIPA…CHGHGRVEKS (79 aa)) form a CR-type zinc finger. Zn(2+)-binding residues include Cys147, Cys150, Cys164, Cys167, Cys186, Cys189, Cys200, and Cys203. CXXCXGXG motif repeat units follow at residues 147–154 (CDVCHGNG), 164–171 (CPTCHGNG), 186–193 (CPHCHGRG), and 200–207 (CIKCHGHG).

Belongs to the DnaJ family. As to quaternary structure, homodimer. Zn(2+) serves as cofactor.

It localises to the cytoplasm. Participates actively in the response to hyperosmotic and heat shock by preventing the aggregation of stress-denatured proteins and by disaggregating proteins, also in an autonomous, DnaK-independent fashion. Unfolded proteins bind initially to DnaJ; upon interaction with the DnaJ-bound protein, DnaK hydrolyzes its bound ATP, resulting in the formation of a stable complex. GrpE releases ADP from DnaK; ATP binding to DnaK triggers the release of the substrate protein, thus completing the reaction cycle. Several rounds of ATP-dependent interactions between DnaJ, DnaK and GrpE are required for fully efficient folding. Also involved, together with DnaK and GrpE, in the DNA replication of plasmids through activation of initiation proteins. This is Chaperone protein DnaJ from Pectobacterium atrosepticum (strain SCRI 1043 / ATCC BAA-672) (Erwinia carotovora subsp. atroseptica).